The sequence spans 112 residues: Colipase (112 aa).

The N-terminal stretch at 1 to 17 (MEKILILLLVALSVAYA) is a signal peptide. The propeptide at 18–22 (APGPR) is enterostatin, activation peptide. Intrachain disulfides connect C34-C45, C40-C56, C44-C78, C66-C86, and C80-C104.

Belongs to the colipase family. As to quaternary structure, forms a 1:1 stoichiometric complex with pancreatic lipase. As to expression, expressed by the pancreas.

It is found in the secreted. Colipase is a cofactor of pancreatic lipase. It allows the lipase to anchor itself to the lipid-water interface. Without colipase the enzyme is washed off by bile salts, which have an inhibitory effect on the lipase. Functionally, enterostatin has a biological activity as a satiety signal. This chain is Colipase, found in Homo sapiens (Human).